Consider the following 57-residue polypeptide: uncharacterized protein (57 aa).

Residues 34–51 (TALLDAAAVVVVPGLLAA) form a helical membrane-spanning segment.

It is found in the membrane. This is an uncharacterized protein from Dictyostelium discoideum (Social amoeba).